Reading from the N-terminus, the 437-residue chain is tRNA wybutosine-synthesizing protein 2 homolog (437 aa).

Residues Ser208, Lys215, Glu255, and 283-284 (DN) each bind S-adenosyl-L-methionine. Over residues 331-344 (SFSGKNPQPPGSSN) the composition is skewed to polar residues. The interval 331–374 (SFSGKNPQPPGSSNMEKKHWPHPQKITTDKQGNRTTGSCMGEMS) is disordered.

This sequence belongs to the class I-like SAM-binding methyltransferase superfamily. TRM5/TYW2 family.

It catalyses the reaction 4-demethylwyosine(37) in tRNA(Phe) + S-adenosyl-L-methionine = 4-demethyl-7-[(3S)-3-amino-3-carboxypropyl]wyosine(37) in tRNA(Phe) + S-methyl-5'-thioadenosine + H(+). It participates in tRNA modification; wybutosine-tRNA(Phe) biosynthesis. S-adenosyl-L-methionine-dependent transferase that acts as a component of the wybutosine biosynthesis pathway. Wybutosine is a hyper modified guanosine with a tricyclic base found at the 3'-position adjacent to the anticodon of eukaryotic phenylalanine tRNA. Catalyzes the transfer of the alpha-amino-alpha-carboxypropyl (acp) group from S-adenosyl-L-methionine to the C-7 position of 4-demethylwyosine (imG-14) to produce wybutosine-86. This is tRNA wybutosine-synthesizing protein 2 homolog (Trmt12) from Rattus norvegicus (Rat).